Here is a 206-residue protein sequence, read N- to C-terminus: Large ribosomal subunit protein eL13y (206 aa).

The disordered stretch occupies residues 182–206 (LERTNKRHAGARAKRAADAEKEEKK). Residues 186-195 (NKRHAGARAK) show a composition bias toward basic residues. A compositionally biased stretch (basic and acidic residues) spans 196–206 (RAADAEKEEKK).

This sequence belongs to the eukaryotic ribosomal protein eL13 family.

The polypeptide is Large ribosomal subunit protein eL13y (Brassica napus (Rape)).